The following is a 241-amino-acid chain: Type III pantothenate kinase (241 aa).

6-13 (DVGNTRIK) contacts ATP. 94-97 (GIDR) contributes to the substrate binding site. D96 acts as the Proton acceptor in catalysis. Residue D117 participates in K(+) binding. Residue T120 coordinates ATP. A substrate-binding site is contributed by T172.

This sequence belongs to the type III pantothenate kinase family. In terms of assembly, homodimer. The cofactor is NH4(+). It depends on K(+) as a cofactor.

Its subcellular location is the cytoplasm. The catalysed reaction is (R)-pantothenate + ATP = (R)-4'-phosphopantothenate + ADP + H(+). It participates in cofactor biosynthesis; coenzyme A biosynthesis; CoA from (R)-pantothenate: step 1/5. In terms of biological role, catalyzes the phosphorylation of pantothenate (Pan), the first step in CoA biosynthesis. This Flavobacterium psychrophilum (strain ATCC 49511 / DSM 21280 / CIP 103535 / JIP02/86) protein is Type III pantothenate kinase.